We begin with the raw amino-acid sequence, 246 residues long: Putative carboxymethylenebutenolidase (246 aa).

Catalysis depends on residues C127, D183, and H215.

This sequence belongs to the dienelactone hydrolase family.

The catalysed reaction is 2-(5-oxo-2,5-dihydrofuran-2-ylidene)acetate + H2O = 4-oxohex-2-enedioate + H(+). This is Putative carboxymethylenebutenolidase from Synechocystis sp. (strain ATCC 27184 / PCC 6803 / Kazusa).